The following is a 436-amino-acid chain: MSDRQQVTNAKGERIAIVAGLRTPFAKQATAFHGVSALDMGKMVVNELLARSELDPKLIEQLVYGQVVQMPAAPNIAREIVLGTGMNVSTDAYSVTRACATSFQSAVNVAESIMTGNIEIGIAGGADSSSVLPIGVSKKLAHALVDLNKARSFGQKLQIFRRLGIKDLLPVPPAVAEYSTGLSMGQTAEQMAKTYNISRADQDALAHRSHTLASETWASGHLRDEVMVAHVPPYKQFIDRDNNIRENSVLESYAKLRPAFDKQHGTVTAANSTPLTDGASAIILMSEGRAKALGYQPIGYIKSYAFSAIDVWQDMLMGPSYATPLALKRAGMELEDLTLIEMHEAFAAQTLANMQMFASKKFAEEKLGRNRAIGEIDMSKFNVLGGSLAYGHPFAATGTRLITQVCRELKRRGGGTGLTTACAAGGLGVAMIVEVE.

Cys99 serves as the catalytic Acyl-thioester intermediate. Residues His392 and Cys422 each act as proton acceptor in the active site.

The protein belongs to the thiolase-like superfamily. Thiolase family. Heterotetramer of two alpha chains (FadJ) and two beta chains (FadI).

Its subcellular location is the cytoplasm. The catalysed reaction is an acyl-CoA + acetyl-CoA = a 3-oxoacyl-CoA + CoA. Its pathway is lipid metabolism; fatty acid beta-oxidation. In terms of biological role, catalyzes the final step of fatty acid oxidation in which acetyl-CoA is released and the CoA ester of a fatty acid two carbons shorter is formed. The sequence is that of 3-ketoacyl-CoA thiolase from Shewanella baltica (strain OS155 / ATCC BAA-1091).